The chain runs to 540 residues: Glucose-6-phosphate isomerase (540 aa).

Catalysis depends on Glu-350, which acts as the Proton donor. Active-site residues include His-381 and Lys-503.

Belongs to the GPI family.

It localises to the cytoplasm. It catalyses the reaction alpha-D-glucose 6-phosphate = beta-D-fructose 6-phosphate. Its pathway is carbohydrate biosynthesis; gluconeogenesis. It functions in the pathway carbohydrate degradation; glycolysis; D-glyceraldehyde 3-phosphate and glycerone phosphate from D-glucose: step 2/4. Its function is as follows. Catalyzes the reversible isomerization of glucose-6-phosphate to fructose-6-phosphate. This chain is Glucose-6-phosphate isomerase, found in Burkholderia cenocepacia (strain ATCC BAA-245 / DSM 16553 / LMG 16656 / NCTC 13227 / J2315 / CF5610) (Burkholderia cepacia (strain J2315)).